Reading from the N-terminus, the 65-residue chain is MAKSKGARIVITLECSNKSVDISQKRKAGVFRYTTTKNRRNTPGRIELKKFCPNCNSHCVFKEIK.

Belongs to the bacterial ribosomal protein bL33 family.

It is found in the plastid. Its subcellular location is the chloroplast. This chain is Large ribosomal subunit protein bL33c (rpl33), found in Porphyra purpurea (Red seaweed).